An 861-amino-acid polypeptide reads, in one-letter code: ToMV resistance protein Tm-2(2) (861 aa).

Residues 63 to 83 are a coiled coil; the sequence is VKNLLKDIQELAGDVEDLLDD. The NB-ARC domain maps to 162–388; that stretch reads DDFNMLQAKL…LESMGHKVQD (227 aa). 185–192 is a binding site for ATP; sequence GMPGLGKT. LRR repeat units lie at residues 225 to 248, 305 to 327, 388 to 411, 449 to 472, 510 to 536, 585 to 608, 609 to 631, 652 to 680, 689 to 710, 712 to 735, 736 to 758, 784 to 810, and 811 to 835; these read LDIA…NLRS, LHAL…IFNF, DGCA…CFLY, LAED…TYNG, VARL…KLEK, MTCL…IVKL, TRLE…VWES, ISSF…FFEP, LRKL…IFSP, LKAL…LSSY, PHIA…SFPP, LRKL…GYSF, and PQLE…DVSM.

It belongs to the disease resistance NB-LRR family. As to quaternary structure, (Microbial infection) Interacts with tobamoviruses mouvement protein (e.g. tobacco mosaic virus (TMV) MP, AC P03583) at the plasma membrane; this interaction triggers defense responses leading to programmed cell death. In terms of assembly, binds to HSP90 proteins (e.g. HSP90-1 and Nicotiana benthamiana HSP90-1); this interaction seems required for defense responses toward tobamoviruses.

It is found in the cell membrane. Its function is as follows. Inhibitor of viral mouvements which confers resistance to some tobamoviruses including tomato mosaic virus (ToMV) (e.g. strains L, B7 and ToMV1-2) and tobacco mosaic virus (TMV), but not to resistance-breaking isolates (e.g. LIIA and ToMV2(2)) ToMV and tomato brown rugose fruit virus (ToBRFV). Elicits a hypersensitive reaction in response to avirulent (Avr) movement proteins from resistance inducing tobamoviruses (e.g. ToMV and TMV) strains, thus leading to programmed cell death; this local extreme resistance requires rbcS. This chain is ToMV resistance protein Tm-2(2), found in Solanum lycopersicum (Tomato).